The following is a 60-amino-acid chain: Large ribosomal subunit protein uL30 (60 aa).

It belongs to the universal ribosomal protein uL30 family. As to quaternary structure, part of the 50S ribosomal subunit.

The chain is Large ribosomal subunit protein uL30 from Sphingopyxis alaskensis (strain DSM 13593 / LMG 18877 / RB2256) (Sphingomonas alaskensis).